The chain runs to 161 residues: Cytochrome c-type biogenesis protein CcmE (161 aa).

The Cytoplasmic portion of the chain corresponds to 1–8; the sequence is MNPRRKKR. Residues 9–29 form a helical; Signal-anchor for type II membrane protein membrane-spanning segment; sequence LTLAIALIGGVAAIASLLLYA. Topologically, residues 30-161 are periplasmic; that stretch reads LNSNLNLFYT…DYSQQKSAAQ (132 aa). Heme contacts are provided by His-131 and Tyr-135. Residues 138–161 are disordered; the sequence is PEVAEAMGQKHEKLDYSQQKSAAQ.

The protein belongs to the CcmE/CycJ family.

Its subcellular location is the cell inner membrane. Heme chaperone required for the biogenesis of c-type cytochromes. Transiently binds heme delivered by CcmC and transfers the heme to apo-cytochromes in a process facilitated by CcmF and CcmH. The sequence is that of Cytochrome c-type biogenesis protein CcmE from Shewanella sp. (strain MR-4).